Reading from the N-terminus, the 225-residue chain is Ribosome maturation factor RimP (225 aa).

This sequence belongs to the RimP family.

The protein localises to the cytoplasm. Required for maturation of 30S ribosomal subunits. The protein is Ribosome maturation factor RimP of Rhodospirillum rubrum (strain ATCC 11170 / ATH 1.1.1 / DSM 467 / LMG 4362 / NCIMB 8255 / S1).